The chain runs to 201 residues: Recombination protein RecR (201 aa).

The C4-type zinc finger occupies 57 to 72 (CADCRTFTEQDVCNIC). The region spanning 81 to 176 (GQICVVESPA…EASRIAHGVP (96 aa)) is the Toprim domain.

The protein belongs to the RecR family.

May play a role in DNA repair. It seems to be involved in an RecBC-independent recombinational process of DNA repair. It may act with RecF and RecO. This chain is Recombination protein RecR, found in Salmonella choleraesuis (strain SC-B67).